The following is a 768-amino-acid chain: WD repeat-containing protein 20 homolog (768 aa).

Residues 103–122 (ESPEAVAPTSSTYEHHKNEP) form a disordered region. 4 WD repeats span residues 224 to 264 (IEKT…ASSN), 302 to 342 (IGEG…LLAV), 345 to 384 (SYFG…VVCR), and 454 to 497 (CSLA…LNQG). The segment at 531-608 (VSPGGAGVNA…VNSESSKKQN (78 aa)) is disordered. Residues 539–553 (NASSDSQSITNNHTT) are compositionally biased toward polar residues. The segment covering 570 to 582 (FSKFTSGSSSATS) has biased composition (low complexity). Over residues 595-608 (NGASVNSESSKKQN) the composition is skewed to polar residues. A WD 5 repeat occupies 646-683 (VSHDRLTVLEFREDCVVTACQEGYICTWGRPGRYQPKR). A disordered region spans residues 684–749 (DCINSPGTAS…PNITSPSYRV (66 aa)). Polar residues predominate over residues 688-712 (SPGTASPESGQKPSGSTSAMTSSYG). Residues 724–733 (SRSSSTYSNS) show a composition bias toward low complexity. Polar residues predominate over residues 734-749 (EQQLRSPNITSPSYRV).

Interacts with usp-46; the interaction increases the catalytic activity of usp-46 in the presence of wdr-48. As to expression, expressed in several neurons in the head and tail.

Its function is as follows. Together with wdr-48, binds to and stimulates the activity of the deubiquitinating enzyme usp-46, leading to deubiquitination and stabilization of the glr-1 glutamate receptor. This is WD repeat-containing protein 20 homolog from Caenorhabditis elegans.